We begin with the raw amino-acid sequence, 320 residues long: Lipoyl synthase (320 aa).

A compositionally biased stretch (basic and acidic residues) spans 1 to 29; it reads MIGKLVRDLKIPDQRHPEKAHRPDNDQPR. Positions 1–32 are disordered; that stretch reads MIGKLVRDLKIPDQRHPEKAHRPDNDQPRKPS. Cys-60, Cys-65, Cys-71, Cys-86, Cys-90, Cys-93, and Ser-300 together coordinate [4Fe-4S] cluster. The Radical SAM core domain occupies 71–289; that stretch reads CWGQGHATMM…EKAAYGKGFL (219 aa).

Belongs to the radical SAM superfamily. Lipoyl synthase family. It depends on [4Fe-4S] cluster as a cofactor.

Its subcellular location is the cytoplasm. The catalysed reaction is [[Fe-S] cluster scaffold protein carrying a second [4Fe-4S](2+) cluster] + N(6)-octanoyl-L-lysyl-[protein] + 2 oxidized [2Fe-2S]-[ferredoxin] + 2 S-adenosyl-L-methionine + 4 H(+) = [[Fe-S] cluster scaffold protein] + N(6)-[(R)-dihydrolipoyl]-L-lysyl-[protein] + 4 Fe(3+) + 2 hydrogen sulfide + 2 5'-deoxyadenosine + 2 L-methionine + 2 reduced [2Fe-2S]-[ferredoxin]. Its pathway is protein modification; protein lipoylation via endogenous pathway; protein N(6)-(lipoyl)lysine from octanoyl-[acyl-carrier-protein]: step 2/2. Its function is as follows. Catalyzes the radical-mediated insertion of two sulfur atoms into the C-6 and C-8 positions of the octanoyl moiety bound to the lipoyl domains of lipoate-dependent enzymes, thereby converting the octanoylated domains into lipoylated derivatives. The polypeptide is Lipoyl synthase (Cereibacter sphaeroides (strain ATCC 17025 / ATH 2.4.3) (Rhodobacter sphaeroides)).